The sequence spans 344 residues: uncharacterized protein (344 aa).

2 residues coordinate NADP(+): Lys38 and Tyr167.

This sequence belongs to the NAD(P)-dependent epimerase/dehydratase family. Dihydroflavonol-4-reductase subfamily.

This is an uncharacterized protein from Saccharomyces cerevisiae (strain ATCC 204508 / S288c) (Baker's yeast).